A 775-amino-acid polypeptide reads, in one-letter code: Coiled-coil domain-containing protein 33 (775 aa).

Disordered regions lie at residues 1 to 23 (MGRQ…LDPY) and 68 to 87 (EANN…PTRA). The segment covering 7–18 (KVPEEPQDRLDT) has biased composition (basic and acidic residues). One can recognise a C2 domain in the interval 12–141 (PQDRLDTSLD…RAFHPYHFEL (130 aa)). Residues 71 to 84 (NHSPQARTSVTSEP) are compositionally biased toward polar residues. Coiled coils occupy residues 414 to 561 (VEMN…ERKE) and 672 to 715 (DKFS…LQEQ). A disordered region spans residues 735–775 (RSQGSTTPRQNLKDEGYPGNIERPLQTHLTPGTRDIRHHLR).

This is Coiled-coil domain-containing protein 33 (Ccdc33) from Rattus norvegicus (Rat).